A 992-amino-acid polypeptide reads, in one-letter code: RNA-binding protein 12 (992 aa).

Positions leucine 304 to glutamate 379 constitute an RRM 1 domain. Phosphoserine occurs at positions 352 and 375. The segment at glutamine 393–serine 424 is disordered. Residues leucine 408 to glutamine 417 show a composition bias toward polar residues. 3 positions are modified to phosphoserine: serine 420, serine 422, and serine 424. The RRM 2 domain maps to phenylalanine 430 to lysine 507. Serine 525 carries the phosphoserine modification. The disordered stretch occupies residues phenylalanine 849–proline 913. The span at leucine 876 to proline 887 shows a compositional bias: low complexity. The RRM 3 domain occupies threonine 916–glycine 992.

Its subcellular location is the nucleus. The protein is RNA-binding protein 12 (Rbm12) of Mus musculus (Mouse).